The sequence spans 625 residues: Autophagy-related protein 20 (625 aa).

Residues 1-59 form a disordered region; it reads MNPNDNNLFGDIEQDNNPSFYGNQSFLRDPYGKSKQTCPPSVTSNGDPSITNDDNNSAH. Polar residues-rich tracts occupy residues 15–26 and 34–59; these read DNNPSFYGNQSF and SKQT…NSAH. One can recognise a PX domain in the interval 79 to 202; it reads NDPNLQINVI…HKFLDPNYEL (124 aa). Positions 118, 120, 144, and 167 each coordinate a 1,2-diacyl-sn-glycero-3-phospho-(1D-myo-inositol-3-phosphate).

Belongs to the sorting nexin family.

It localises to the endosome membrane. Its subcellular location is the preautophagosomal structure membrane. In terms of biological role, required for cytoplasm to vacuole transport (Cvt), pexophagy and mitophagy. Also involved in endoplasmic reticulum-specific autophagic process and is essential for the survival of cells subjected to severe ER stress. Functions in protein retrieval from the endocytic pathway. The polypeptide is Autophagy-related protein 20 (ATG20) (Debaryomyces hansenii (strain ATCC 36239 / CBS 767 / BCRC 21394 / JCM 1990 / NBRC 0083 / IGC 2968) (Yeast)).